The primary structure comprises 412 residues: 5,5'-dehydrodivanillate O-demethylase ferredoxin reductase subunit (412 aa).

The FAD site is built by A14, K49, V82, R130, D279, and V298.

The protein belongs to the FAD-dependent oxidoreductase family. Monomer. The three-component monooxygenase is composed of an oxygenase (LigXa), a ferredoxin (LigXc) and a ferredoxin reductase (LigXd). FAD is required as a cofactor.

The enzyme catalyses 5,5'-dehydrodivanillate + NADH + O2 + H(+) = 2,2',3-trihydroxy-3'-methoxy-5,5'-dicarboxybiphenyl + formaldehyde + NAD(+) + H2O. Its function is as follows. Involved in the catabolism of 5,5'-dehydrodivanillate (DDVA), an intermediate in the biodegradation of lignin. Part of a three-component monooxygenase that catalyzes the O-demethylation of DDVA, leading to the formation of 2,2',3-trihydroxy-3'-methoxy-5,5'-dicarboxybiphenyl (OH-DDVA). LigXd probably transfers the electrons from NADH to LigXc. The chain is 5,5'-dehydrodivanillate O-demethylase ferredoxin reductase subunit from Sphingobium sp. (strain NBRC 103272 / SYK-6).